The primary structure comprises 121 residues: Alpha-lactalbumin (121 aa).

Positions 1–121 (IDYRKCQASQ…CLEDLDQWRC (121 aa)) constitute a C-type lysozyme domain. Disulfide bonds link cysteine 6–cysteine 121, cysteine 28–cysteine 112, cysteine 61–cysteine 77, and cysteine 73–cysteine 91. Asparagine 44 is a glycosylation site (N-linked (GlcNAc...) asparagine). Ca(2+)-binding residues include lysine 79, aspartate 82, aspartate 84, aspartate 87, and aspartate 88.

Belongs to the glycosyl hydrolase 22 family. Lactose synthase (LS) is a heterodimer of a catalytic component, beta1,4-galactosyltransferase (beta4Gal-T1) and a regulatory component, alpha-lactalbumin (LA). As to expression, mammary gland specific. Secreted in milk.

It localises to the secreted. Its function is as follows. Regulatory subunit of lactose synthase, changes the substrate specificity of galactosyltransferase in the mammary gland making glucose a good acceptor substrate for this enzyme. This enables LS to synthesize lactose, the major carbohydrate component of milk. In other tissues, galactosyltransferase transfers galactose onto the N-acetylglucosamine of the oligosaccharide chains in glycoproteins. In Notamacropus rufogriseus (Red-necked wallaby), this protein is Alpha-lactalbumin (LALBA).